A 333-amino-acid chain; its full sequence is MVAAQDPPNAPHIPVLLEPILTRCAPITGTWLDGTFGAGGYARGLLEAGADRVIGVDQDPLALEMAADWAGDYGDRLRLVAGNFEALDAHAGGPLDGVVLDLGVSSMQLDRAERGFSFLRDGPLDMRMAQHGRSAADLVAEEDADMLADILFHLGEERAARRIARAIVAARAVAPITRTSQLAEIVASCLPRPKPGQSHAATRSFQALRIAVNDELGALVRGLEAAEGALEPGGWLAVVTFHSIEDRIVKRFFTQASGGAGRANRYAPETEDTPARFRLEPRKAIAPTEAEVAANPRARSARLRIGRRTAAPAMPADRAALGLPHLYTLTETP.

S-adenosyl-L-methionine is bound by residues 39–41, Asp57, Phe84, Asp101, and Gln108; that span reads GGY.

Belongs to the methyltransferase superfamily. RsmH family.

Its subcellular location is the cytoplasm. It carries out the reaction cytidine(1402) in 16S rRNA + S-adenosyl-L-methionine = N(4)-methylcytidine(1402) in 16S rRNA + S-adenosyl-L-homocysteine + H(+). In terms of biological role, specifically methylates the N4 position of cytidine in position 1402 (C1402) of 16S rRNA. The chain is Ribosomal RNA small subunit methyltransferase H from Dinoroseobacter shibae (strain DSM 16493 / NCIMB 14021 / DFL 12).